The primary structure comprises 1213 residues: DNA-directed RNA polymerase subunit beta' (1213 aa).

4 residues coordinate Zn(2+): Cys60, Cys62, Cys75, and Cys78. Mg(2+) contacts are provided by Asp450, Asp452, and Asp454. Residues Cys819, Cys893, Cys900, and Cys903 each coordinate Zn(2+).

This sequence belongs to the RNA polymerase beta' chain family. In terms of assembly, the RNAP catalytic core consists of 2 alpha, 1 beta, 1 beta' and 1 omega subunit. When a sigma factor is associated with the core the holoenzyme is formed, which can initiate transcription. It depends on Mg(2+) as a cofactor. Zn(2+) serves as cofactor.

It catalyses the reaction RNA(n) + a ribonucleoside 5'-triphosphate = RNA(n+1) + diphosphate. DNA-dependent RNA polymerase catalyzes the transcription of DNA into RNA using the four ribonucleoside triphosphates as substrates. The chain is DNA-directed RNA polymerase subunit beta' from Streptococcus pyogenes serotype M18 (strain MGAS8232).